Reading from the N-terminus, the 285-residue chain is K88 fimbrial protein AB (285 aa).

A signal peptide spans 1 to 21 (MKKTLIALAIAASAASGMAHA).

This sequence belongs to the fimbrial K88 protein family. In terms of assembly, K88 fimbria, 0.1-1 micrometer in length and 7 nanometers in diameter, is composed of about 100 identical subunits.

It is found in the fimbrium. Its function is as follows. K88 major fimbrial subunit. Fimbriae (also called pili), are polar filaments radiating from the surface of the bacterium to a length of 0.5-1.5 micrometers and numbering 100-300 per cell. They enable bacteria to colonize the epithelium of specific host organs. The protein is K88 fimbrial protein AB (faeG) of Escherichia coli.